The following is a 215-amino-acid chain: RWD domain-containing protein C1393.09c (215 aa).

The RWD domain maps to 7-114 (EEREILESIY…SVAKEETNAI (108 aa)).

The protein localises to the cytoplasm. It is found in the nucleus. The polypeptide is RWD domain-containing protein C1393.09c (Schizosaccharomyces pombe (strain 972 / ATCC 24843) (Fission yeast)).